The sequence spans 622 residues: Kinesin light chain 2 (622 aa).

A coiled-coil region spans residues 78-143; it reads ILALSSHLGA…KQHLLFMSQI (66 aa). Residues 145–164 show a composition bias toward basic and acidic residues; that stretch reads KLDEDASPNEEKGDVPKDTL. Residues 145–191 form a disordered region; sequence KLDEDASPNEEKGDVPKDTLDDLFPNEDEQSPAPSPGGGDVSGQHGG. A phosphoserine mark is found at Ser151, Ser175, and Ser179. The segment covering 180-190 has biased composition (gly residues); it reads PGGGDVSGQHG. TPR repeat units lie at residues 198–231, 240–273, 282–315, 324–357, and 366–399; these read LRTLHNLVIQYASQGRYEVAVPLCKQALEDLEKT, ATMLNILALVYRDQNKYKEAAHLLNDALAIREKT, AATLNNLAVLYGKRGKYKEAEPLCKRALEIREKV, AKQLSNLALLCQNQGKAEEVEYYYRRALEIYATR, and AKTKNNLASCYLKQGKYQDAETLYKEILTRAHEK. The residue at position 445 (Ser445) is a Phosphoserine. The TPR 6 repeat unit spans residues 449 to 482; it reads NTTLRSLGALYRRQGKLEAAHTLEDCASRNRKQG. Disordered stretches follow at residues 476–548 and 563–622; these read SRNR…SFGK and KLQG…SLVG. Residues 493–509 show a composition bias toward basic and acidic residues; the sequence is ELLKDGSGRRGDRRSSR. Phosphoserine is present on residues Ser508 and Ser521. A compositionally biased stretch (low complexity) spans 538–547; the sequence is GSLRRSGSFG. Ser581, Ser582, Ser589, Ser608, Ser610, and Ser615 each carry phosphoserine. A compositionally biased stretch (low complexity) spans 601–622; it reads LSDSRTLSSSSMDLSRRSSLVG.

Belongs to the kinesin light chain family. Oligomeric complex composed of two heavy chains and two light chains. Interacts (via TPR repeats) with PLEKHM2.

The protein resides in the cytoplasm. It localises to the cytoskeleton. It is found in the lysosome membrane. In terms of biological role, kinesin is a microtubule-associated force-producing protein that plays a role in organelle transport. The light chain functions in coupling of cargo to the heavy chain or in the modulation of its ATPase activity. Through binding with PLEKHM2 and ARL8B, recruits kinesin-1 to lysosomes and hence direct lysosomes movement toward microtubule plus ends. In Homo sapiens (Human), this protein is Kinesin light chain 2.